The chain runs to 592 residues: A-type ATP synthase subunit A (592 aa).

236-243 (GPFGSGKT) is a binding site for ATP.

Belongs to the ATPase alpha/beta chains family. In terms of assembly, has multiple subunits with at least A(3), B(3), C, D, E, F, H, I and proteolipid K(x).

The protein localises to the cell membrane. The enzyme catalyses ATP + H2O + 4 H(+)(in) = ADP + phosphate + 5 H(+)(out). Functionally, component of the A-type ATP synthase that produces ATP from ADP in the presence of a proton gradient across the membrane. The A chain is the catalytic subunit. This chain is A-type ATP synthase subunit A, found in Methanopyrus kandleri (strain AV19 / DSM 6324 / JCM 9639 / NBRC 100938).